The sequence spans 556 residues: Arginine--tRNA ligase (556 aa).

The 'HIGH' region motif lies at 133–143 (ANPTGPIHIGH).

It belongs to the class-I aminoacyl-tRNA synthetase family. As to quaternary structure, monomer.

The protein localises to the cytoplasm. The catalysed reaction is tRNA(Arg) + L-arginine + ATP = L-arginyl-tRNA(Arg) + AMP + diphosphate. The protein is Arginine--tRNA ligase of Dehalococcoides mccartyi (strain CBDB1).